Here is a 219-residue protein sequence, read N- to C-terminus: Type-5 uracil-DNA glycosylase (219 aa).

[4Fe-4S] cluster is bound by residues Cys-13, Cys-16, Cys-115, and Cys-130.

It belongs to the uracil-DNA glycosylase (UDG) superfamily. Type 5 (UDGb) family.

Its function is as follows. DNA glycosylase with broad substrate specificity. Can remove uracil from double-stranded DNA containing either a U/G, U/A, U/C or U/T base pair. Can also excise hypoxanthine from double-stranded DNA containing G/I, T/I, and A/I base pairs, xanthine from both double-stranded and single stranded DNA, thymine from G/T mismatched DNA, 5'-hydroxymethyluracil and 5'-fluorouracil. The sequence is that of Type-5 uracil-DNA glycosylase from Thermus thermophilus (strain ATCC 27634 / DSM 579 / HB8).